We begin with the raw amino-acid sequence, 186 residues long: uncharacterized protein (186 aa).

This is an uncharacterized protein from Methanocaldococcus jannaschii (strain ATCC 43067 / DSM 2661 / JAL-1 / JCM 10045 / NBRC 100440) (Methanococcus jannaschii).